Consider the following 286-residue polypeptide: NAD kinase (286 aa).

The Proton acceptor role is filled by D68. NAD(+) contacts are provided by residues 68-69, K73, 142-143, R153, D172, 183-188, and Q242; these read DG, ND, and TGYSFS.

This sequence belongs to the NAD kinase family. A divalent metal cation is required as a cofactor.

It localises to the cytoplasm. The enzyme catalyses NAD(+) + ATP = ADP + NADP(+) + H(+). In terms of biological role, involved in the regulation of the intracellular balance of NAD and NADP, and is a key enzyme in the biosynthesis of NADP. Catalyzes specifically the phosphorylation on 2'-hydroxyl of the adenosine moiety of NAD to yield NADP. The polypeptide is NAD kinase (Natranaerobius thermophilus (strain ATCC BAA-1301 / DSM 18059 / JW/NM-WN-LF)).